The primary structure comprises 207 residues: Dephospho-CoA kinase (207 aa).

In terms of domain architecture, DPCK spans 5–207; that stretch reads IVGLTGGIAS…AALQTHRIEN (203 aa). An ATP-binding site is contributed by 13–18; that stretch reads ASGKSA.

Belongs to the CoaE family.

The protein resides in the cytoplasm. The enzyme catalyses 3'-dephospho-CoA + ATP = ADP + CoA + H(+). It participates in cofactor biosynthesis; coenzyme A biosynthesis; CoA from (R)-pantothenate: step 5/5. Catalyzes the phosphorylation of the 3'-hydroxyl group of dephosphocoenzyme A to form coenzyme A. This is Dephospho-CoA kinase from Xanthomonas campestris pv. campestris (strain ATCC 33913 / DSM 3586 / NCPPB 528 / LMG 568 / P 25).